The primary structure comprises 131 residues: Methylated-DNA--protein-cysteine methyltransferase (131 aa).

The Nucleophile; methyl group acceptor role is filled by C98.

It belongs to the MGMT family.

The protein resides in the cytoplasm. The catalysed reaction is a 6-O-methyl-2'-deoxyguanosine in DNA + L-cysteinyl-[protein] = S-methyl-L-cysteinyl-[protein] + a 2'-deoxyguanosine in DNA. It carries out the reaction a 4-O-methyl-thymidine in DNA + L-cysteinyl-[protein] = a thymidine in DNA + S-methyl-L-cysteinyl-[protein]. Involved in the cellular defense against the biological effects of O6-methylguanine (O6-MeG) and O4-methylthymine (O4-MeT) in DNA. Repairs the methylated nucleobase in DNA by stoichiometrically transferring the methyl group to a cysteine residue in the enzyme. This is a suicide reaction: the enzyme is irreversibly inactivated. This Methanopyrus kandleri (strain AV19 / DSM 6324 / JCM 9639 / NBRC 100938) protein is Methylated-DNA--protein-cysteine methyltransferase (ogt).